Consider the following 877-residue polypeptide: Phosphoenolpyruvate carboxylase (877 aa).

Residues His137 and Lys542 contribute to the active site.

The protein belongs to the PEPCase type 1 family. Mg(2+) is required as a cofactor.

It carries out the reaction oxaloacetate + phosphate = phosphoenolpyruvate + hydrogencarbonate. Its function is as follows. Forms oxaloacetate, a four-carbon dicarboxylic acid source for the tricarboxylic acid cycle. This is Phosphoenolpyruvate carboxylase from Tolumonas auensis (strain DSM 9187 / NBRC 110442 / TA 4).